We begin with the raw amino-acid sequence, 370 residues long: Accessory Sec system protein translocase subunit SecY2 (370 aa).

The next 9 membrane-spanning stretches (helical) occupy residues 17 to 37, 65 to 85, 105 to 125, 134 to 154, 155 to 175, 188 to 208, 240 to 260, 276 to 296, and 339 to 359; these read IIFTCWILLIYIFGTHIPAIT, VFSLGLGPWLTAMIFMTLFYY, IFTLILALIQAYFVVFTLLSH, WLIILVLVTGAMILVWLSDLN, MRFGIAGPMPIVMISIIRSIM, LLISAALVLIIILLVLIFIEI, IAIMISFAAFFVLNSAVNLIV, FSTPIGITIFLILQLVLSYGI, and WIGAFIVTIIIGIPLYATLLI.

This sequence belongs to the SecY/SEC61-alpha family. SecY2 subfamily. In terms of assembly, component of the accessory SecA2/SecY2 protein translocase complex required to export cell wall proteins. May form heterotrimers with SecE and SecG subunits.

It is found in the cell membrane. Functionally, part of the accessory SecA2/SecY2 system specifically required for export of possible cell wall proteins. The central subunit of a protein translocation channel. The chain is Accessory Sec system protein translocase subunit SecY2 from Staphylococcus carnosus (strain TM300).